The following is a 382-amino-acid chain: Pyrimidine monooxygenase RutA (382 aa).

Residues 68–69, asparagine 134, glutamate 143, 159–160, and serine 209 each bind FMN; these read IK and RY.

Belongs to the NtaA/SnaA/DszA monooxygenase family. RutA subfamily.

It carries out the reaction uracil + FMNH2 + NADH + O2 = (Z)-3-ureidoacrylate + FMN + NAD(+) + H2O + H(+). The catalysed reaction is thymine + FMNH2 + NADH + O2 = (Z)-2-methylureidoacrylate + FMN + NAD(+) + H2O + H(+). Catalyzes the pyrimidine ring opening between N-3 and C-4 by an unusual flavin hydroperoxide-catalyzed mechanism, adding oxygen atoms in the process to yield ureidoacrylate peracid, that immediately reacts with FMN forming ureidoacrylate and FMN-N(5)-oxide. The FMN-N(5)-oxide reacts spontaneously with NADH to produce FMN. Requires the flavin reductase RutF to regenerate FMN in vivo. The chain is Pyrimidine monooxygenase RutA from Shigella flexneri serotype X (strain 2002017).